The following is a 288-amino-acid chain: Polyisoprenoid diphosphate/phosphate phosphohydrolase PLPP6 (288 aa).

Residues 1–82 (MPSPKARSGS…STGGGGQQLP (82 aa)) are disordered. Topologically, residues 1–127 (MPSPKARSGS…EDSSWGSVRP (127 aa)) are cytoplasmic. The helical transmembrane segment at 128–148 (LMKLIEVSGHGIPWLAGAAYC) threads the bilayer. At 149 to 161 (LYKSDSPAGQEVM) the chain is on the lumenal side. A helical transmembrane segment spans residues 162 to 182 (LNLLMALVLDVVLVGVLKAVV). Positions 179 to 187 (KAVVRRRRP) are phosphatase sequence motif I. Residues 183–223 (RRRRPAHNRMDMFATFSVDSYSFPSGHATRAAMCARFLLNH) are Cytoplasmic-facing. The phosphatase sequence motif II stretch occupies residues 206 to 209 (PSGH). His209 acts as the Proton donors in catalysis. A helical transmembrane segment spans residues 224 to 244 (LVLAAPLRVLVLLWATIVGFS). A phosphatase sequence motif III region spans residues 244 to 255 (SRVLLGRHNVTD). At 245–255 (RVLLGRHNVTD) the chain is on the lumenal side. The active-site Nucleophile is the His251. Residues 256-276 (VAFGFFMGYWQYNLVEMLWLS) traverse the membrane as a helical segment. The Cytoplasmic portion of the chain corresponds to 277–288 (PVMLQSAIGQLH).

It belongs to the PA-phosphatase related phosphoesterase family.

Its subcellular location is the endoplasmic reticulum membrane. It is found in the nucleus envelope. The protein localises to the nucleus inner membrane. The enzyme catalyses presqualene diphosphate + H2O = presqualene phosphate + phosphate + H(+). It carries out the reaction presqualene phosphate + H2O = presqualene alcohol + phosphate. It catalyses the reaction (2E,6E)-farnesyl diphosphate + H2O = (2E,6E)-farnesyl phosphate + phosphate + H(+). The catalysed reaction is (2E,6E)-farnesyl phosphate + H2O = (2E,6E)-farnesol + phosphate. The enzyme catalyses (2E,6E,10E)-geranylgeranyl diphosphate + H2O = (2E,6E,10E)-geranylgeranyl phosphate + phosphate + H(+). It carries out the reaction (2E,6E,10E)-geranylgeranyl phosphate + H2O = (2E,6E,10E)-geranylgeraniol + phosphate. It catalyses the reaction (2E)-geranyl diphosphate + H2O = (2E)-geranyl phosphate + phosphate + H(+). The catalysed reaction is (2E)-geranyl phosphate + H2O = (2E)-geraniol + phosphate. The enzyme catalyses 1,2-dihexadecanoyl-sn-glycero-3-phosphate + H2O = 1,2-dihexadecanoyl-sn-glycerol + phosphate. Magnesium-independent polyisoprenoid diphosphatase that catalyzes the sequential dephosphorylation of presqualene, farnesyl, geranyl and geranylgeranyl diphosphates. May regulate the biosynthesis of cholesterol and related sterols by dephosphorylating presqualene and farnesyl diphosphate, two key intermediates in this biosynthetic pathway. May also play a role in protein prenylation by acting on farnesyl diphosphate and its derivative geranylgeranyl diphosphate, two precursors for the addition of isoprenoid anchors to membrane proteins. Has a lower activity towards phosphatidic acid (PA), but through phosphatidic acid dephosphorylation may participate in the biosynthesis of phospholipids and triacylglycerols. May also act on ceramide-1-P, lysophosphatidic acid (LPA) and sphing-4-enine 1-phosphate/sphingosine-1-phosphate. The sequence is that of Polyisoprenoid diphosphate/phosphate phosphohydrolase PLPP6 (plpp6) from Danio rerio (Zebrafish).